The chain runs to 1354 residues: Enhancer of mRNA-decapping protein 4 homolog (1354 aa).

A disordered region spans residues Pro18 to Ala38. Phosphoserine is present on Ser32. WD repeat units follow at residues Glu309 to His348 and Cys363 to Thr406. The disordered stretch occupies residues Glu552–Thr581. Residues Ser554–Glu565 show a composition bias toward polar residues. Position 561 is a phosphoserine (Ser561). Thr563 carries the post-translational modification Phosphothreonine. At Ser576 the chain carries Phosphoserine. Thr581 bears the Phosphothreonine mark. Ser759, Ser762, and Ser763 each carry phosphoserine. The stretch at Ser765–Ser803 forms a coiled coil. Over residues Leu788–Leu799 the composition is skewed to acidic residues. Disordered regions lie at residues Leu788–Gly811 and Asn838–Thr884. Low complexity predominate over residues Asn853 to Thr884. Coiled coils occupy residues Glu893–Gln936, Asn969–Met1036, and Lys1159–Glu1188. At Ser1207 the chain carries Phosphoserine. 2 positions are modified to phosphothreonine: Thr1211 and Thr1317. Tyr1320 is modified (phosphotyrosine).

This sequence belongs to the WD repeat EDC4 family. Homodimer. Interacts with Dcp1 and Dcp2. Interacts with Gyf.

The protein localises to the cytoplasm. It is found in the P-body. In terms of biological role, in the process of mRNA degradation, seems to play a role in mRNA decapping. Required for silencing a subset of endogenous miRNA targets. The chain is Enhancer of mRNA-decapping protein 4 homolog (Ge-1) from Drosophila melanogaster (Fruit fly).